Reading from the N-terminus, the 577-residue chain is Steryl-sulfatase (577 aa).

An N-terminal signal peptide occupies residues 1–19 (MLWPCLLALLLSQLNFLCA). The Lumenal segment spans residues 21–183 (RPGPGPNFLL…GTVFGSAQQV (163 aa)). Ca(2+)-binding residues include D34 and D35. The N-linked (GlcNAc...) asparagine glycan is linked to N46. Ca(2+) is bound at residue C74. Catalysis depends on C74, which acts as the Nucleophile. 3-oxoalanine (Cys) is present on C74. Residue H135 is part of the active site. 2 disulfide bridges follow: C140–C147 and C169–C241. Residues 184-207 (FVVLPMNILGAVLLAMALARWAGL) form a helical membrane-spanning segment. Residues 208–211 (ARPP) are Cytoplasmic-facing. A helical membrane pass occupies residues 212–233 (GWVFGVTVAAMAAVGGAYVAFL). At 234–577 (YHFRPANCFL…PLACRCAGDG (344 aa)) the chain is on the lumenal side. A glycan (N-linked (GlcNAc...) asparagine) is linked at N332. Positions 341 and 342 each coordinate Ca(2+). 3 cysteine pairs are disulfide-bonded: C445/C488, C480/C486, and C561/C571. An N-linked (GlcNAc...) asparagine glycan is attached at N458.

The protein belongs to the sulfatase family. In terms of assembly, homodimer. Ca(2+) serves as cofactor. In terms of processing, the conversion to 3-oxoalanine (also known as C-formylglycine, FGly), of a serine or cysteine residue in prokaryotes and of a cysteine residue in eukaryotes, is critical for catalytic activity.

It is found in the microsome membrane. The protein localises to the endoplasmic reticulum membrane. The enzyme catalyses dehydroepiandrosterone 3-sulfate + H2O = 3beta-hydroxyandrost-5-en-17-one + sulfate + H(+). The catalysed reaction is estrone 3-sulfate + H2O = estrone + sulfate + H(+). Catalyzes the conversion of sulfated steroid precursors, such as dehydroepiandrosterone sulfate (DHEA-S) and estrone sulfate to the free steroid. The protein is Steryl-sulfatase (Sts) of Rattus norvegicus (Rat).